The primary structure comprises 387 residues: Putative 8-amino-7-oxononanoate synthase (387 aa).

Arg19 provides a ligand contact to substrate. 107–108 lines the pyridoxal 5'-phosphate pocket; the sequence is GY. His132 serves as a coordination point for substrate. Pyridoxal 5'-phosphate-binding positions include Ser180, 206 to 209, and 237 to 240; these read DEAH and TFGK. Lys240 bears the N6-(pyridoxal phosphate)lysine mark. Thr354 lines the substrate pocket.

It belongs to the class-II pyridoxal-phosphate-dependent aminotransferase family. BioF subfamily. In terms of assembly, homodimer. Pyridoxal 5'-phosphate is required as a cofactor.

It catalyses the reaction 6-carboxyhexanoyl-[ACP] + L-alanine + H(+) = (8S)-8-amino-7-oxononanoate + holo-[ACP] + CO2. Its pathway is cofactor biosynthesis; biotin biosynthesis. Its function is as follows. Catalyzes the decarboxylative condensation of pimeloyl-[acyl-carrier protein] and L-alanine to produce 8-amino-7-oxononanoate (AON), [acyl-carrier protein], and carbon dioxide. This chain is Putative 8-amino-7-oxononanoate synthase (bioF), found in Pasteurella multocida (strain Pm70).